The following is a 2556-amino-acid chain: Ubiquitin carboxyl-terminal hydrolase 9Y (2556 aa).

The span at 1-33 (MTITTRGSPVGENESQGQTSDGQPQPSFQQNQI) shows a compositional bias: polar residues. The interval 1-68 (MTITTRGSPV…QHEEEDPSFP (68 aa)) is disordered. Low complexity predominate over residues 34-44 (SSSDSSNETSP). A Phosphoserine modification is found at S587. T589 carries the phosphothreonine modification. The segment at 971-999 (NMPSSPDSSSDSSAGPPGNHSHNNYRDVS) is disordered. Residues 973–983 (PSSPDSSSDSS) are compositionally biased toward low complexity. One can recognise a USP domain in the interval 1559 to 1958 (VGLKNAGATC…NAYILFYERM (400 aa)). C1568 functions as the Nucleophile in the catalytic mechanism. Positions 1729, 1731, 1773, and 1776 each coordinate Zn(2+). H1881 serves as the catalytic Proton acceptor. S2447 bears the Phosphoserine mark. Positions 2513–2556 (QNYVPEQPFSGPASHHLNNPQKNDKPQETHESNEEISSCLIKDQ) are disordered. Residues 2534–2545 (KNDKPQETHESN) show a composition bias toward basic and acidic residues. S2549 carries the phosphoserine modification.

This sequence belongs to the peptidase C19 family.

The catalysed reaction is Thiol-dependent hydrolysis of ester, thioester, amide, peptide and isopeptide bonds formed by the C-terminal Gly of ubiquitin (a 76-residue protein attached to proteins as an intracellular targeting signal).. The protein operates within protein modification; protein ubiquitination. Functionally, deubiquitinase that mediates deubiquitination of target proteins. May stabilize target proteins that are important for male germ cell development. The protein is Ubiquitin carboxyl-terminal hydrolase 9Y of Mus musculus (Mouse).